The following is a 361-amino-acid chain: Phosphoserine aminotransferase (361 aa).

Arg43 serves as a coordination point for L-glutamate. Pyridoxal 5'-phosphate-binding positions include 77–78 (AS), Trp103, Thr153, Asp173, and Gln196. N6-(pyridoxal phosphate)lysine is present on Lys197. A pyridoxal 5'-phosphate-binding site is contributed by 238–239 (NT).

It belongs to the class-V pyridoxal-phosphate-dependent aminotransferase family. SerC subfamily. Homodimer. It depends on pyridoxal 5'-phosphate as a cofactor.

The protein localises to the cytoplasm. The catalysed reaction is O-phospho-L-serine + 2-oxoglutarate = 3-phosphooxypyruvate + L-glutamate. The enzyme catalyses 4-(phosphooxy)-L-threonine + 2-oxoglutarate = (R)-3-hydroxy-2-oxo-4-phosphooxybutanoate + L-glutamate. The protein operates within amino-acid biosynthesis; L-serine biosynthesis; L-serine from 3-phospho-D-glycerate: step 2/3. In terms of biological role, catalyzes the reversible conversion of 3-phosphohydroxypyruvate to phosphoserine and of 3-hydroxy-2-oxo-4-phosphonooxybutanoate to phosphohydroxythreonine. The polypeptide is Phosphoserine aminotransferase (Bacillus anthracis (strain A0248)).